A 566-amino-acid chain; its full sequence is 3-oxosteroid 1-dehydrogenase (566 aa).

10–39 (DVVVVGSGAAGMVAALVAAHRGLSTVVVEK) provides a ligand contact to FAD.

It belongs to the FAD-dependent oxidoreductase 2 family. 3-oxosteroid dehydrogenase subfamily. FAD is required as a cofactor.

The enzyme catalyses a 3-oxosteroid + A = a 3-oxo-Delta(1)-steroid + AH2. It carries out the reaction a 3-oxo-Delta(4)-steroid + A = a 3-oxo-Delta(1,4)-steroid + AH2. Involved in the degradation of cholesterol. Catalyzes the elimination of the C-1 and C-2 hydrogen atoms of the A-ring from the polycyclic ring structure of 3-ketosteroids. Is also involved in the formation of 3-keto-1,4-diene-steroid from 3-keto-4-ene-steroid. This Mycobacterium tuberculosis (strain CDC 1551 / Oshkosh) protein is 3-oxosteroid 1-dehydrogenase (kstD).